The primary structure comprises 480 residues: Argininosuccinate lyase (480 aa).

Residues methionine 1–proline 17 are compositionally biased toward polar residues. Positions methionine 1–arginine 24 are disordered.

It belongs to the lyase 1 family. Argininosuccinate lyase subfamily.

The protein localises to the cytoplasm. The catalysed reaction is 2-(N(omega)-L-arginino)succinate = fumarate + L-arginine. Its pathway is amino-acid biosynthesis; L-arginine biosynthesis; L-arginine from L-ornithine and carbamoyl phosphate: step 3/3. The protein is Argininosuccinate lyase of Azoarcus sp. (strain BH72).